The primary structure comprises 388 residues: tRNA-specific 2-thiouridylase MnmA (388 aa).

ATP contacts are provided by residues 26–33 (GLSGGVDS) and L52. The active-site Nucleophile is C113. Residues C113 and C223 are joined by a disulfide bond. G138 is a binding site for ATP. The interaction with tRNA stretch occupies residues 173–175 (KDQ). C223 serves as the catalytic Cysteine persulfide intermediate. Residues 328–329 (RY) are interaction with tRNA.

It belongs to the MnmA/TRMU family.

The protein localises to the cytoplasm. The catalysed reaction is S-sulfanyl-L-cysteinyl-[protein] + uridine(34) in tRNA + AH2 + ATP = 2-thiouridine(34) in tRNA + L-cysteinyl-[protein] + A + AMP + diphosphate + H(+). Functionally, catalyzes the 2-thiolation of uridine at the wobble position (U34) of tRNA, leading to the formation of s(2)U34. The polypeptide is tRNA-specific 2-thiouridylase MnmA (Prochlorococcus marinus (strain NATL2A)).